Here is a 294-residue protein sequence, read N- to C-terminus: tRNA dimethylallyltransferase (294 aa).

An ATP-binding site is contributed by 7 to 14; the sequence is GPTGSGKS. 9–14 serves as a coordination point for substrate; the sequence is TGSGKS.

It belongs to the IPP transferase family. Monomer. Requires Mg(2+) as cofactor.

It carries out the reaction adenosine(37) in tRNA + dimethylallyl diphosphate = N(6)-dimethylallyladenosine(37) in tRNA + diphosphate. Catalyzes the transfer of a dimethylallyl group onto the adenine at position 37 in tRNAs that read codons beginning with uridine, leading to the formation of N6-(dimethylallyl)adenosine (i(6)A). In Akkermansia muciniphila (strain ATCC BAA-835 / DSM 22959 / JCM 33894 / BCRC 81048 / CCUG 64013 / CIP 107961 / Muc), this protein is tRNA dimethylallyltransferase.